A 159-amino-acid chain; its full sequence is 3-dehydroquinate dehydratase (159 aa).

The active-site Proton acceptor is Tyr-22. Residues Asn-73, His-79, and Asp-86 each coordinate substrate. Residue His-99 is the Proton donor of the active site. Residues 100–101 (IS) and Arg-110 contribute to the substrate site.

This sequence belongs to the type-II 3-dehydroquinase family. Homododecamer.

It carries out the reaction 3-dehydroquinate = 3-dehydroshikimate + H2O. The protein operates within metabolic intermediate biosynthesis; chorismate biosynthesis; chorismate from D-erythrose 4-phosphate and phosphoenolpyruvate: step 3/7. In terms of biological role, catalyzes a trans-dehydration via an enolate intermediate. In Campylobacter jejuni subsp. doylei (strain ATCC BAA-1458 / RM4099 / 269.97), this protein is 3-dehydroquinate dehydratase.